Here is a 232-residue protein sequence, read N- to C-terminus: Flagellar L-ring protein (232 aa).

The N-terminal stretch at 1–15 is a signal peptide; it reads MKKVLFYVLPFAFFG. The N-palmitoyl cysteine moiety is linked to residue Cys-16. Residue Cys-16 is the site of S-diacylglycerol cysteine attachment.

This sequence belongs to the FlgH family. As to quaternary structure, the basal body constitutes a major portion of the flagellar organelle and consists of four rings (L,P,S, and M) mounted on a central rod.

It localises to the cell outer membrane. Its subcellular location is the bacterial flagellum basal body. Functionally, assembles around the rod to form the L-ring and probably protects the motor/basal body from shearing forces during rotation. This chain is Flagellar L-ring protein, found in Campylobacter jejuni subsp. jejuni serotype O:23/36 (strain 81-176).